The chain runs to 685 residues: MSRTLRPSAMGSRVGALASPGLALLLSLTAHCSGPQAKGLPKGGLNASEANTWVRNNTSLLQNFWCLPASQLPREQLSSLIRSLASQRVALKAWQLSCLANLAAQLGLQDDFEFHPPNLLLFYDLSQVGDTNCRAFIHHAAQGDTELLTNLPNQRVALQRTALACLGGPHLQLSASDLWLLGVLVCDMEAAQIVTADPSVLRNLLRCPRLTVMQTAALNTLLASGKTQIGPPGSWNLQGLQALGLLATYISPHLWEKVQEAVGLDFFRSVVAACRAGQLSRHDARRFVDNFLESKATSVSSRPKRRTGRSCVRGNITAATLHDDLFLVHYDCTQLESCLGTRVLRANLDPLLQHPLPAECQRVVKAKLTQIYPHGIPEDQLHLIPSLVYLYSLAEIGQWNITSGDTVMILLASDAALDNQTEAVLQRFLDHNGKVTGALLVAIGGSRLCWMSLKQLQFIQPSEFRLAGAPDISPCPQSRKDALFVKAHEVFRNTSNVGEYYYLIRPYLGGAPLEELQYLAQANISMDIDTFTNLNPLTLKSMGVDSVRNLLGQNLGDLRKARNHPNVILWMHSHNMTDLSDMGLYTSPTQAYVANRPPNTAYPPSSLIHSLDPPGNDGVSHTSGSPPVHLGYLSLAVALPSSLLWLLLCQLPSGQMATAHRTLGPMALAQGSWTPEHQIPEKRSC.

An N-terminal signal peptide occupies residues 1–32; that stretch reads MSRTLRPSAMGSRVGALASPGLALLLSLTAHC. At 33–627 the chain is on the extracellular side; that stretch reads SGPQAKGLPK…GVSHTSGSPP (595 aa). 2 N-linked (GlcNAc...) asparagine glycosylation sites follow: Asn315 and Asn400. The interval 603-624 is disordered; sequence PPSSLIHSLDPPGNDGVSHTSG. The chain crosses the membrane as a helical span at residues 628–648; that stretch reads VHLGYLSLAVALPSSLLWLLL. Residues 649 to 685 are Cytoplasmic-facing; it reads CQLPSGQMATAHRTLGPMALAQGSWTPEHQIPEKRSC.

Belongs to the mesothelin family.

It is found in the membrane. Functionally, may play a role in cellular adhesion. This is Mesothelin-like protein (Mslnl) from Mus musculus (Mouse).